Consider the following 225-residue polypeptide: Fibronectin type III domain-containing protein (225 aa).

The first 17 residues, 1-17, serve as a signal peptide directing secretion; sequence MFSFGIILLTVVSFTNA. In terms of domain architecture, Fibronectin type-III spans 106–206; it reads PPTNVIVEST…MPLNVKTPDI (101 aa).

As to expression, component of the organic matrix of calcified shell layers like nacre and prisms.

The protein localises to the secreted. In Mytilus californianus (California mussel), this protein is Fibronectin type III domain-containing protein.